The following is a 102-amino-acid chain: Small ribosomal subunit protein uS10 (102 aa).

The protein belongs to the universal ribosomal protein uS10 family. Part of the 30S ribosomal subunit.

Functionally, involved in the binding of tRNA to the ribosomes. This Hyperthermus butylicus (strain DSM 5456 / JCM 9403 / PLM1-5) protein is Small ribosomal subunit protein uS10.